The primary structure comprises 283 residues: Acetyl-coenzyme A carboxylase carboxyl transferase subunit beta (283 aa).

The region spanning 23–283 is the CoA carboxyltransferase N-terminal domain; sequence LWIKCPSCSE…DFLMAGKAAA (261 aa). Zn(2+) is bound by residues Cys27, Cys30, Cys46, and Cys49. The C4-type zinc finger occupies 27-49; sequence CPSCSEMLFTKEYEDNLSVCPHC.

Belongs to the AccD/PCCB family. In terms of assembly, acetyl-CoA carboxylase is a heterohexamer composed of biotin carboxyl carrier protein (AccB), biotin carboxylase (AccC) and two subunits each of ACCase subunit alpha (AccA) and ACCase subunit beta (AccD). The cofactor is Zn(2+).

It localises to the cytoplasm. It catalyses the reaction N(6)-carboxybiotinyl-L-lysyl-[protein] + acetyl-CoA = N(6)-biotinyl-L-lysyl-[protein] + malonyl-CoA. The protein operates within lipid metabolism; malonyl-CoA biosynthesis; malonyl-CoA from acetyl-CoA: step 1/1. Its function is as follows. Component of the acetyl coenzyme A carboxylase (ACC) complex. Biotin carboxylase (BC) catalyzes the carboxylation of biotin on its carrier protein (BCCP) and then the CO(2) group is transferred by the transcarboxylase to acetyl-CoA to form malonyl-CoA. This Novosphingobium aromaticivorans (strain ATCC 700278 / DSM 12444 / CCUG 56034 / CIP 105152 / NBRC 16084 / F199) protein is Acetyl-coenzyme A carboxylase carboxyl transferase subunit beta.